Here is an 81-residue protein sequence, read N- to C-terminus: Small ribosomal subunit protein bS16 (81 aa).

Belongs to the bacterial ribosomal protein bS16 family.

In Treponema denticola (strain ATCC 35405 / DSM 14222 / CIP 103919 / JCM 8153 / KCTC 15104), this protein is Small ribosomal subunit protein bS16.